A 407-amino-acid chain; its full sequence is Probable sodium/metabolite cotransporter BASS5, chloroplastic (407 aa).

Residues 1-57 (MGVISPTETLFLKSQHRLLQPRNYSYALAFHSTRRVANFPRNSFSSLGSCSVDFPLR) constitute a chloroplast transit peptide. The next 9 membrane-spanning stretches (helical) occupy residues 101-121 (FIPHGILLSTILALVYPPSFT), 122-142 (WFKPRYFVPGLGFMMFAVGIN), 162-184 (YIGQYLIKPLLGYIFGVIAVSLF), 191-213 (GAGIMLVSCVSGAQLSNYTTFLT), 222-242 (IVMTSISTATAVLVTPMLSLL), 252-272 (VFGMISSILQVVITPIAAGLL), 286-306 (PFLPALTVIDMSCCIGAPLAL), 317-337 (ATILFLVITFHLLAFVAGYFF), and 379-399 (LVGVPPAISTVVMSLMGVSLV).

Belongs to the bile acid:sodium symporter (BASS) (TC 2.A.28) family. Widely expressed.

The protein localises to the membrane. It is found in the plastid. The protein resides in the chloroplast envelope. Plastidic transporter involved in the biosynthesis of aliphatic glucosinolates by translocating the biosynthetic intermediates of Met-derived glucosinolates across chloroplast membranes. Transports short chain (C2) alpha-keto acids, such as 4-methylsulfanyl-2-oxobutanoic acid, from the cytosol to the chloroplast where they are subjected to chain elongation cycles. Also functions in the transport of chain-elongated (C3 to C8) Met derivatives from the chloroplast to the cytosol. Does not seem to be involved in the transport of indole-derived glucosinolates. The polypeptide is Probable sodium/metabolite cotransporter BASS5, chloroplastic (BASS5) (Arabidopsis thaliana (Mouse-ear cress)).